The sequence spans 425 residues: Proline--tRNA ligase (425 aa).

Belongs to the class-II aminoacyl-tRNA synthetase family. ProS type 2 subfamily. As to quaternary structure, homodimer.

Its subcellular location is the cytoplasm. It catalyses the reaction tRNA(Pro) + L-proline + ATP = L-prolyl-tRNA(Pro) + AMP + diphosphate. Functionally, catalyzes the attachment of proline to tRNA(Pro) in a two-step reaction: proline is first activated by ATP to form Pro-AMP and then transferred to the acceptor end of tRNA(Pro). The chain is Proline--tRNA ligase from Anaplasma marginale (strain St. Maries).